The chain runs to 360 residues: Heme A synthase (360 aa).

A run of 5 helical transmembrane segments spans residues 13-33, 99-119, 129-149, 160-180, and 199-219; these read AVRW…LVGG, LLGR…LWRG, LWLL…MVAS, YRLA…VWTV, and SALL…VAGL. Residue histidine 263 coordinates heme. 3 consecutive transmembrane segments (helical) span residues 265–282, 292–312, and 315–335; these read MTAY…FDAV, GALW…LTLL, and VPIG…TLAV. Histidine 323 contributes to the heme binding site.

It belongs to the COX15/CtaA family. Type 2 subfamily. As to quaternary structure, interacts with CtaB. Requires heme b as cofactor.

It localises to the cell membrane. The enzyme catalyses Fe(II)-heme o + 2 A + H2O = Fe(II)-heme a + 2 AH2. It participates in porphyrin-containing compound metabolism; heme A biosynthesis; heme A from heme O: step 1/1. Functionally, catalyzes the conversion of heme O to heme A by two successive hydroxylations of the methyl group at C8. The first hydroxylation forms heme I, the second hydroxylation results in an unstable dihydroxymethyl group, which spontaneously dehydrates, resulting in the formyl group of heme A. The polypeptide is Heme A synthase (Bradyrhizobium diazoefficiens (strain JCM 10833 / BCRC 13528 / IAM 13628 / NBRC 14792 / USDA 110)).